The following is a 1001-amino-acid chain: Ribonuclease E/G-like protein, chloroplastic (1001 aa).

The N-terminal 48 residues, 1–48, are a transit peptide targeting the chloroplast; the sequence is MDVTEVPWRRLPQFSVSSRASWLVSSGFPLSSYMFSHVERGKTFRLTL. The CBM20 domain occupies 76 to 185; the sequence is SRLKGLCEVV…KIIIRDSWMS (110 aa). Residue aspartate 755 coordinates Mg(2+). Positions 769-789 form a coiled coil; that stretch reads QEKAILEVNLAAARQIAREIR. Aspartate 800 provides a ligand contact to Mg(2+). Positions 858 and 861 each coordinate Zn(2+).

The protein belongs to the RNase E/G family. Part of a chloroplastic degradosome-like complex. Interacts with RHON1. A homotetramer formed by a dimer of dimers. It depends on Mg(2+) as a cofactor. Zn(2+) is required as a cofactor. In terms of tissue distribution, expressed in cotyledons, rosette and cauline leaves.

The protein resides in the plastid. It localises to the chloroplast stroma. Involved in intercistronic processing of primary transcripts from chloroplast operons. The endonucleolytic activity of the enzyme depends on the number of phosphates at the 5' end, is inhibited by structured RNA, and preferentially cleaves A/U-rich sequences. In Arabidopsis thaliana (Mouse-ear cress), this protein is Ribonuclease E/G-like protein, chloroplastic (RNE).